The sequence spans 132 residues: Cytidine deaminase (132 aa).

The region spanning 1-128 is the CMP/dCMP-type deaminase domain; the sequence is MDRQMLIKEA…ELLPGAFTAE (128 aa). Residue 42-44 participates in substrate binding; sequence NIE. Cys53 provides a ligand contact to Zn(2+). The Proton donor role is filled by Glu55. Cys86 and Cys89 together coordinate Zn(2+).

This sequence belongs to the cytidine and deoxycytidylate deaminase family. Requires Zn(2+) as cofactor.

The enzyme catalyses cytidine + H2O + H(+) = uridine + NH4(+). It carries out the reaction 2'-deoxycytidine + H2O + H(+) = 2'-deoxyuridine + NH4(+). This enzyme scavenges exogenous and endogenous cytidine and 2'-deoxycytidine for UMP synthesis. The chain is Cytidine deaminase (cdd) from Halalkalibacterium halodurans (strain ATCC BAA-125 / DSM 18197 / FERM 7344 / JCM 9153 / C-125) (Bacillus halodurans).